Reading from the N-terminus, the 238-residue chain is Leucine-rich repeat-containing protein 57 (238 aa).

LRR repeat units follow at residues 39–60 (NLRTIDLSSNKIEVVPPMMGKF), 62–84 (LLKSLSLNNNRISRLPDELCKLK), 85–106 (KLETLHLNGNQISQLPADFVQL), 108–129 (ALKTLNLSGNRLKTLPAQLFKL), 131–152 (NLDVVDLSKNRIQAIPDEVSGL), 153–175 (QAIELNLNQNQISQISVNISHCP), 176–196 (RLKVLRLEENCLELSMLPPSI), and 201–221 (QISLLAVEGNLFEIKKLRDLE).

In Xenopus laevis (African clawed frog), this protein is Leucine-rich repeat-containing protein 57 (lrrc57).